Reading from the N-terminus, the 193-residue chain is Probable GTP-binding protein EngB (193 aa).

The 170-residue stretch at 24 to 193 (NIPEIALAGR…ELKAALAELL (170 aa)) folds into the EngB-type G domain. GTP contacts are provided by residues 32–39 (GRSNVGKS), 59–63 (GKTRT), 77–80 (DLPG), 144–147 (TKAD), and 174–176 (FSA). Mg(2+)-binding residues include Ser39 and Thr61.

Belongs to the TRAFAC class TrmE-Era-EngA-EngB-Septin-like GTPase superfamily. EngB GTPase family. It depends on Mg(2+) as a cofactor.

In terms of biological role, necessary for normal cell division and for the maintenance of normal septation. This chain is Probable GTP-binding protein EngB, found in Syntrophomonas wolfei subsp. wolfei (strain DSM 2245B / Goettingen).